A 329-amino-acid chain; its full sequence is Elongation factor Ts (329 aa).

The involved in Mg(2+) ion dislocation from EF-Tu stretch occupies residues 79-82; that stretch reads TDFV.

It belongs to the EF-Ts family.

Its subcellular location is the cytoplasm. Its function is as follows. Associates with the EF-Tu.GDP complex and induces the exchange of GDP to GTP. It remains bound to the aminoacyl-tRNA.EF-Tu.GTP complex up to the GTP hydrolysis stage on the ribosome. This chain is Elongation factor Ts, found in Parabacteroides distasonis (strain ATCC 8503 / DSM 20701 / CIP 104284 / JCM 5825 / NCTC 11152).